A 230-amino-acid chain; its full sequence is Ion-translocating oxidoreductase complex subunit E (230 aa).

6 helical membrane-spanning segments follow: residues 18–38, 39–59, 63–83, 86–106, 128–148, and 182–202; these read ALVQ…ATNA, LGLG…ISTL, TPTE…VSAV, LINA…PLIV, ALDG…LGAM, and PFLL…MLAG.

It belongs to the NqrDE/RnfAE family. In terms of assembly, the complex is composed of six subunits: RsxA, RsxB, RsxC, RsxD, RsxE and RsxG.

Its subcellular location is the cell inner membrane. Functionally, part of a membrane-bound complex that couples electron transfer with translocation of ions across the membrane. Required to maintain the reduced state of SoxR. The sequence is that of Ion-translocating oxidoreductase complex subunit E from Escherichia fergusonii (strain ATCC 35469 / DSM 13698 / CCUG 18766 / IAM 14443 / JCM 21226 / LMG 7866 / NBRC 102419 / NCTC 12128 / CDC 0568-73).